Reading from the N-terminus, the 205-residue chain is MAQLYFYYSAMNAGKSTALLQSSYNYQERGMRTVVYTAEIDDRFGAGKVSSRIGLSSPAKLFNQNTSLFEEIRAESARQTIHCVLVDESQFLTRQQVYQLSEVVDKLDIPVLCYGLRTDFRGELFVGSQYLLAWSDKLVELKTICFCGRKASMVLRLDQDGRPYNEGEQVVIGGNERYVSVCRKHYKDALEEGSLTAIQERHRHI.

ATP contacts are provided by residues 9-16 and 87-90; these read SAMNAGKS and DESQ. The active-site Proton acceptor is Glu88. Positions 145, 147, 182, and 185 each coordinate Zn(2+).

Belongs to the thymidine kinase family. As to quaternary structure, homotetramer.

It is found in the cytoplasm. The enzyme catalyses thymidine + ATP = dTMP + ADP + H(+). The protein is Thymidine kinase of Salmonella paratyphi A (strain ATCC 9150 / SARB42).